We begin with the raw amino-acid sequence, 443 residues long: Thymidine phosphorylase (443 aa).

Belongs to the thymidine/pyrimidine-nucleoside phosphorylase family. As to quaternary structure, homodimer.

It catalyses the reaction thymidine + phosphate = 2-deoxy-alpha-D-ribose 1-phosphate + thymine. It participates in pyrimidine metabolism; dTMP biosynthesis via salvage pathway; dTMP from thymine: step 1/2. Functionally, the enzymes which catalyze the reversible phosphorolysis of pyrimidine nucleosides are involved in the degradation of these compounds and in their utilization as carbon and energy sources, or in the rescue of pyrimidine bases for nucleotide synthesis. The protein is Thymidine phosphorylase of Aliivibrio fischeri (strain ATCC 700601 / ES114) (Vibrio fischeri).